The sequence spans 396 residues: Elongation factor Tu (396 aa).

The region spanning 10-206 (KPHVNVGTIG…ALDNYIPLPE (197 aa)) is the tr-type G domain. The segment at 19 to 26 (GHVDHGKT) is G1. A GTP-binding site is contributed by 19 to 26 (GHVDHGKT). Position 26 (Thr-26) interacts with Mg(2+). The interval 60 to 64 (GITIN) is G2. The segment at 81–84 (DCPG) is G3. GTP is bound by residues 81–85 (DCPGH) and 136–139 (NKCD). The G4 stretch occupies residues 136–139 (NKCD). The interval 174 to 176 (SAK) is G5.

It belongs to the TRAFAC class translation factor GTPase superfamily. Classic translation factor GTPase family. EF-Tu/EF-1A subfamily. In terms of assembly, monomer.

The protein resides in the cytoplasm. The enzyme catalyses GTP + H2O = GDP + phosphate + H(+). In terms of biological role, GTP hydrolase that promotes the GTP-dependent binding of aminoacyl-tRNA to the A-site of ribosomes during protein biosynthesis. The chain is Elongation factor Tu from Polaromonas naphthalenivorans (strain CJ2).